Reading from the N-terminus, the 259-residue chain is Protein FAM220A (259 aa).

As to quaternary structure, interacts with transcriptional activator STAT3; the interaction occurs in both the nucleus and the cytoplasm, is enhanced by IL6 and promotes STAT3 dephosphorylation, leading to negative regulation of STAT3 transcriptional activator activity. Can interact with both unphosphorylated and phosphorylated STAT3 but interacts preferentially with phosphorylated STAT3 in the nucleus. Interacts with protein phosphatase PTPN2/TC45; this promotes interaction of PTPN2 with STAT3, leading to dephosphorylation of STAT3 by PTPN2.

Its subcellular location is the nucleus. The protein localises to the cytoplasm. It localises to the cytoplasmic vesicle. It is found in the secretory vesicle. The protein resides in the acrosome. Functionally, promotes dephosphorylation of transcriptional activator STAT3 by interacting with both STAT3 and protein phosphatase PTPN2. This promotes interaction of PTPN2 with STAT3 and mediates STAT3 dephosphorylation by PTPN2, leading to negative regulation of STAT3 transcriptional activator activity. May be required for spermiogenesis or sperm function. The protein is Protein FAM220A (FAM220A) of Macaca fascicularis (Crab-eating macaque).